Consider the following 358-residue polypeptide: Sulfate/thiosulfate import ATP-binding protein CysA 1 (358 aa).

Positions 3 to 237 (IQVENIRKAF…PASAFVYGFL (235 aa)) constitute an ABC transporter domain. 35-42 (GPSGCGKT) is an ATP binding site.

This sequence belongs to the ABC transporter superfamily. Sulfate/tungstate importer (TC 3.A.1.6) family. As to quaternary structure, the complex is composed of two ATP-binding proteins (CysA), two transmembrane proteins (CysT and CysW) and a solute-binding protein (CysP).

The protein resides in the cell inner membrane. It carries out the reaction sulfate(out) + ATP + H2O = sulfate(in) + ADP + phosphate + H(+). The enzyme catalyses thiosulfate(out) + ATP + H2O = thiosulfate(in) + ADP + phosphate + H(+). Its function is as follows. Part of the ABC transporter complex CysAWTP involved in sulfate/thiosulfate import. Responsible for energy coupling to the transport system. This is Sulfate/thiosulfate import ATP-binding protein CysA 1 from Chromobacterium violaceum (strain ATCC 12472 / DSM 30191 / JCM 1249 / CCUG 213 / NBRC 12614 / NCIMB 9131 / NCTC 9757 / MK).